The following is a 248-amino-acid chain: MTWRATVLTLFPEMFPGPLGVSLAGRALASGLWGLEARDIRDSATDRHRSVDDTPAGGGPGMVLRADVLAAAIDAVDAAADRPRLVMSPRGRPLTQARVAELAAGPGPLIVCGRFEGIDQRVIDARGLEEVSIGDYVLSGGEIAAMALIDACVRLLPGVMGKLESSTDESFSAGLLEYPQYTRPQTFEGRAIPEVLLSGDHGKVAAWRLGEAEALTKARRPDLWAARPAQTIRAKGESQKTPKNKTDG.

S-adenosyl-L-methionine-binding positions include glycine 113 and 133 to 138 (IGDYVL). The interval 227 to 248 (RPAQTIRAKGESQKTPKNKTDG) is disordered. The segment covering 234 to 248 (AKGESQKTPKNKTDG) has biased composition (basic and acidic residues).

It belongs to the RNA methyltransferase TrmD family. Homodimer.

Its subcellular location is the cytoplasm. It catalyses the reaction guanosine(37) in tRNA + S-adenosyl-L-methionine = N(1)-methylguanosine(37) in tRNA + S-adenosyl-L-homocysteine + H(+). Its function is as follows. Specifically methylates guanosine-37 in various tRNAs. The sequence is that of tRNA (guanine-N(1)-)-methyltransferase from Rhodopseudomonas palustris (strain TIE-1).